A 343-amino-acid polypeptide reads, in one-letter code: Anthranilate phosphoribosyltransferase (343 aa).

5-phospho-alpha-D-ribose 1-diphosphate contacts are provided by residues G79, 82–83 (GD), T87, 89–92 (NVST), 106–114 (KHGNRAASS), and S118. G79 lines the anthranilate pocket. S91 contributes to the Mg(2+) binding site. N109 is an anthranilate binding site. Residue R164 participates in anthranilate binding. Mg(2+) is bound by residues D223 and E224.

It belongs to the anthranilate phosphoribosyltransferase family. Homodimer. The cofactor is Mg(2+).

The enzyme catalyses N-(5-phospho-beta-D-ribosyl)anthranilate + diphosphate = 5-phospho-alpha-D-ribose 1-diphosphate + anthranilate. Its pathway is amino-acid biosynthesis; L-tryptophan biosynthesis; L-tryptophan from chorismate: step 2/5. Functionally, catalyzes the transfer of the phosphoribosyl group of 5-phosphorylribose-1-pyrophosphate (PRPP) to anthranilate to yield N-(5'-phosphoribosyl)-anthranilate (PRA). This is Anthranilate phosphoribosyltransferase from Metallosphaera sedula (strain ATCC 51363 / DSM 5348 / JCM 9185 / NBRC 15509 / TH2).